The sequence spans 273 residues: Putative pyruvate, phosphate dikinase regulatory protein 2 (273 aa).

151-158 (GISRTSKT) serves as a coordination point for ADP.

The protein belongs to the pyruvate, phosphate/water dikinase regulatory protein family. PDRP subfamily.

The enzyme catalyses N(tele)-phospho-L-histidyl/L-threonyl-[pyruvate, phosphate dikinase] + ADP = N(tele)-phospho-L-histidyl/O-phospho-L-threonyl-[pyruvate, phosphate dikinase] + AMP + H(+). The catalysed reaction is N(tele)-phospho-L-histidyl/O-phospho-L-threonyl-[pyruvate, phosphate dikinase] + phosphate + H(+) = N(tele)-phospho-L-histidyl/L-threonyl-[pyruvate, phosphate dikinase] + diphosphate. Functionally, bifunctional serine/threonine kinase and phosphorylase involved in the regulation of the pyruvate, phosphate dikinase (PPDK) by catalyzing its phosphorylation/dephosphorylation. The protein is Putative pyruvate, phosphate dikinase regulatory protein 2 of Staphylococcus saprophyticus subsp. saprophyticus (strain ATCC 15305 / DSM 20229 / NCIMB 8711 / NCTC 7292 / S-41).